Reading from the N-terminus, the 433-residue chain is Phosphomethylpyrimidine synthase (433 aa).

Substrate is bound by residues Asn69, Met98, Tyr127, His163, 185-187 (SRG), 226-229 (DALR), and Glu265. Residue His269 participates in Zn(2+) binding. Position 292 (Tyr292) interacts with substrate. Position 333 (His333) interacts with Zn(2+). Positions 409, 412, and 416 each coordinate [4Fe-4S] cluster.

The protein belongs to the ThiC family. [4Fe-4S] cluster is required as a cofactor.

The catalysed reaction is 5-amino-1-(5-phospho-beta-D-ribosyl)imidazole + S-adenosyl-L-methionine = 4-amino-2-methyl-5-(phosphooxymethyl)pyrimidine + CO + 5'-deoxyadenosine + formate + L-methionine + 3 H(+). The protein operates within cofactor biosynthesis; thiamine diphosphate biosynthesis. In terms of biological role, catalyzes the synthesis of the hydroxymethylpyrimidine phosphate (HMP-P) moiety of thiamine from aminoimidazole ribotide (AIR) in a radical S-adenosyl-L-methionine (SAM)-dependent reaction. This Finegoldia magna (strain ATCC 29328 / DSM 20472 / WAL 2508) (Peptostreptococcus magnus) protein is Phosphomethylpyrimidine synthase.